Consider the following 288-residue polypeptide: Release factor glutamine methyltransferase (288 aa).

S-adenosyl-L-methionine is bound by residues 123-127 (GTGSG), aspartate 146, and asparagine 190. 190–193 (NPPY) is a binding site for substrate.

The protein belongs to the protein N5-glutamine methyltransferase family. PrmC subfamily.

The enzyme catalyses L-glutaminyl-[peptide chain release factor] + S-adenosyl-L-methionine = N(5)-methyl-L-glutaminyl-[peptide chain release factor] + S-adenosyl-L-homocysteine + H(+). In terms of biological role, methylates the class 1 translation termination release factors RF1/PrfA and RF2/PrfB on the glutamine residue of the universally conserved GGQ motif. The chain is Release factor glutamine methyltransferase from Bacillus subtilis (strain 168).